A 163-amino-acid chain; its full sequence is MAQQNIEVPQLPIPGEDNSNRVPEQVVIGHPAAGVPPIPQQKSGMDLYFDQALDYMGDHPVLTGVGGFFALYFAAGAYKSVSKRLGGSSQGVKYLKGGFDPKMNAKEALAILNLNETNLSKKKLKEVHRRIMLANHPDKGGSPYLATKINEAKDFLEKKVVRK.

Residues 1–60 are Mitochondrial intermembrane-facing; the sequence is MAQQNIEVPQLPIPGEDNSNRVPEQVVIGHPAAGVPPIPQQKSGMDLYFDQALDYMGDHP. A helical transmembrane segment spans residues 61–78; sequence VLTGVGGFFALYFAAGAY. Topologically, residues 79–163 are mitochondrial matrix; it reads KSVSKRLGGS…DFLEKKVVRK (85 aa). One can recognise a J domain in the interval 107–163; sequence EALAILNLNETNLSKKKLKEVHRRIMLANHPDKGGSPYLATKINEAKDFLEKKVVRK.

This sequence belongs to the TIM14 family. In terms of assembly, heterodimer with PAM16. Component of the PAM complex, at least composed of mtHsp70, MGE1, TIM44, PAM16, PAM17 and PAM18.

It localises to the mitochondrion inner membrane. In terms of biological role, essential component of the PAM complex, a complex required for the translocation of transit peptide-containing proteins from the inner membrane into the mitochondrial matrix in an ATP-dependent manner. In the complex, it is required to stimulate activity of mtHSP70 (SSC1). This Kluyveromyces lactis (strain ATCC 8585 / CBS 2359 / DSM 70799 / NBRC 1267 / NRRL Y-1140 / WM37) (Yeast) protein is Mitochondrial import inner membrane translocase subunit TIM14 (PAM18).